The primary structure comprises 334 residues: Probable fructose-bisphosphate aldolase class 1 (334 aa).

Belongs to the class I fructose-bisphosphate aldolase family.

The catalysed reaction is beta-D-fructose 1,6-bisphosphate = D-glyceraldehyde 3-phosphate + dihydroxyacetone phosphate. The protein operates within carbohydrate degradation; glycolysis; D-glyceraldehyde 3-phosphate and glycerone phosphate from D-glucose: step 4/4. The sequence is that of Probable fructose-bisphosphate aldolase class 1 from Xanthomonas campestris pv. campestris (strain ATCC 33913 / DSM 3586 / NCPPB 528 / LMG 568 / P 25).